The following is a 186-amino-acid chain: Alkyl hydroperoxide reductase AhpD (186 aa).

The Proton donor role is filled by C132. The cysteines at positions 132 and 135 are disulfide-linked. Residue C135 is the Cysteine sulfenic acid (-SOH) intermediate of the active site.

This sequence belongs to the AhpD family.

It catalyses the reaction N(6)-[(R)-dihydrolipoyl]-L-lysyl-[lipoyl-carrier protein] + a hydroperoxide = N(6)-[(R)-lipoyl]-L-lysyl-[lipoyl-carrier protein] + an alcohol + H2O. In terms of biological role, antioxidant protein with alkyl hydroperoxidase activity. Required for the reduction of the AhpC active site cysteine residues and for the regeneration of the AhpC enzyme activity. The protein is Alkyl hydroperoxide reductase AhpD of Anaeromyxobacter dehalogenans (strain 2CP-1 / ATCC BAA-258).